The chain runs to 307 residues: Pantothenate kinase (307 aa).

Position 90–97 (90–97) interacts with ATP; it reads GSVAVGKS.

Belongs to the prokaryotic pantothenate kinase family.

The protein localises to the cytoplasm. The enzyme catalyses (R)-pantothenate + ATP = (R)-4'-phosphopantothenate + ADP + H(+). Its pathway is cofactor biosynthesis; coenzyme A biosynthesis; CoA from (R)-pantothenate: step 1/5. The polypeptide is Pantothenate kinase (Limosilactobacillus fermentum (strain NBRC 3956 / LMG 18251) (Lactobacillus fermentum)).